A 192-amino-acid chain; its full sequence is MYHLGDEYSQKAKREGYLARSVYKLIEINEKFSLFSSGNVLDIGASPGSFSQYAYKKLKRGVLVSVDINDISLRYVNNFYFIKGDIFSDDTASKINKFGPYSLVISDVAPKTTGNRLVDTSNSFNLNMRIIDLSFEVLLKKGNLLVKVFQGGDEMQIFKKFEKYFKFVKKIRPKAVRKNSFEIYFLGKSFGK.

Residues G48, F50, D67, D85, and D107 each contribute to the S-adenosyl-L-methionine site. The active-site Proton acceptor is the K147.

This sequence belongs to the class I-like SAM-binding methyltransferase superfamily. RNA methyltransferase RlmE family.

The protein localises to the cytoplasm. The catalysed reaction is uridine(2552) in 23S rRNA + S-adenosyl-L-methionine = 2'-O-methyluridine(2552) in 23S rRNA + S-adenosyl-L-homocysteine + H(+). In terms of biological role, specifically methylates the uridine in position 2552 of 23S rRNA at the 2'-O position of the ribose in the fully assembled 50S ribosomal subunit. This is Ribosomal RNA large subunit methyltransferase E from Borrelia garinii subsp. bavariensis (strain ATCC BAA-2496 / DSM 23469 / PBi) (Borreliella bavariensis).